Consider the following 175-residue polypeptide: Inorganic pyrophosphatase (175 aa).

Residues K30, R44, and Y56 each coordinate substrate. Residues D66, D71, and D103 each contribute to the Mg(2+) site. A substrate-binding site is contributed by Y140.

The protein belongs to the PPase family. In terms of assembly, homohexamer. Requires Mg(2+) as cofactor.

Its subcellular location is the cytoplasm. It carries out the reaction diphosphate + H2O = 2 phosphate + H(+). Its function is as follows. Catalyzes the hydrolysis of inorganic pyrophosphate (PPi) forming two phosphate ions. This is Inorganic pyrophosphatase from Thermus thermophilus (strain ATCC 27634 / DSM 579 / HB8).